The following is a 153-amino-acid chain: Regulatory protein RecX (153 aa).

Belongs to the RecX family.

It localises to the cytoplasm. Modulates RecA activity. This chain is Regulatory protein RecX, found in Mannheimia succiniciproducens (strain KCTC 0769BP / MBEL55E).